Reading from the N-terminus, the 254-residue chain is Phosphomannomutase (254 aa).

Aspartate 16 acts as the Nucleophile in catalysis. Aspartate 16 and aspartate 18 together coordinate Mg(2+). The active-site Proton donor/acceptor is the aspartate 18. Residues arginine 25, arginine 129, arginine 140, arginine 147, serine 185, and aspartate 187 each contribute to the alpha-D-mannose 1-phosphate site. Mg(2+)-binding residues include aspartate 216, tyrosine 228, aspartate 230, and threonine 233.

Belongs to the eukaryotic PMM family. As to quaternary structure, homodimer.

It is found in the cytoplasm. The catalysed reaction is alpha-D-mannose 1-phosphate = D-mannose 6-phosphate. It functions in the pathway nucleotide-sugar biosynthesis; GDP-alpha-D-mannose biosynthesis; alpha-D-mannose 1-phosphate from D-fructose 6-phosphate: step 2/2. Involved in the synthesis of the GDP-mannose and dolichol-phosphate-mannose required for a number of critical mannosyl transfer reactions. Required for maintaining N-linked glycoprotein glycosylation at the neuromuscular junction (NMJ) synaptomatrix, and thus acts in multiple pathways that prevent NMJ structural overgrowth, restrict synaptic bouton differentiation, and limit NMJ neurotransmission strength, in order to maintain viability, coordinate movement, and in adults ensure correct wing positioning. Acts in the NMJ trans-synaptic Wg pathway via glycosylation of synaptic Mmp2 which enables dlp/wg signaling during development. This chain is Phosphomannomutase, found in Drosophila melanogaster (Fruit fly).